The following is a 362-amino-acid chain: Phosphoserine aminotransferase (362 aa).

Arg43 lines the L-glutamate pocket. Residues Ala77–Thr78, Trp103, Thr153, Asp173, and Gln196 each bind pyridoxal 5'-phosphate. Lys197 bears the N6-(pyridoxal phosphate)lysine mark. Asn238–Thr239 contributes to the pyridoxal 5'-phosphate binding site.

Belongs to the class-V pyridoxal-phosphate-dependent aminotransferase family. SerC subfamily. As to quaternary structure, homodimer. Pyridoxal 5'-phosphate serves as cofactor.

The protein localises to the cytoplasm. The catalysed reaction is O-phospho-L-serine + 2-oxoglutarate = 3-phosphooxypyruvate + L-glutamate. It catalyses the reaction 4-(phosphooxy)-L-threonine + 2-oxoglutarate = (R)-3-hydroxy-2-oxo-4-phosphooxybutanoate + L-glutamate. It functions in the pathway amino-acid biosynthesis; L-serine biosynthesis; L-serine from 3-phospho-D-glycerate: step 2/3. Its pathway is cofactor biosynthesis; pyridoxine 5'-phosphate biosynthesis; pyridoxine 5'-phosphate from D-erythrose 4-phosphate: step 3/5. Functionally, catalyzes the reversible conversion of 3-phosphohydroxypyruvate to phosphoserine and of 3-hydroxy-2-oxo-4-phosphonooxybutanoate to phosphohydroxythreonine. The chain is Phosphoserine aminotransferase from Xylella fastidiosa (strain 9a5c).